A 180-amino-acid chain; its full sequence is Diphosphoinositol polyphosphate phosphohydrolase 2 (180 aa).

Methionine 1 bears the N-acetylmethionine mark. Residues arginine 10, 18-20, and 39-41 contribute to the substrate site; these read KKR and SSR. In terms of domain architecture, Nudix hydrolase spans 18–144; it reads KKRAACLCFR…VHAEYLEKLK (127 aa). Mg(2+)-binding residues include glycine 50 and glutamate 66. A Nudix box motif is present at residues 51–72; it reads GGMEPEEEPGGAAVREVYEEAG. The active-site Proton acceptor is glutamate 69. Residue glutamate 70 coordinates Mg(2+). Residues 89-91, arginine 115, and lysine 133 contribute to the substrate site; that span reads RKH.

Belongs to the Nudix hydrolase family. DIPP subfamily. Requires Mg(2+) as cofactor. Mn(2+) is required as a cofactor. In terms of tissue distribution, expressed in heart and, at lower level in skeletal muscle, pancreas and kidney.

Its subcellular location is the cytoplasm. It carries out the reaction diphospho-myo-inositol polyphosphate + H2O = myo-inositol polyphosphate + phosphate.. The enzyme catalyses 5-diphospho-1D-myo-inositol 1,2,3,4,6-pentakisphosphate + H2O = 1D-myo-inositol hexakisphosphate + phosphate + H(+). It catalyses the reaction 3,5-bis(diphospho)-1D-myo-inositol 1,2,4,6-tetrakisphosphate + H2O = 3-diphospho-1D-myo-inositol 1,2,4,5,6-pentakisphosphate + phosphate + 2 H(+). The catalysed reaction is 5-diphospho-1D-myo-inositol 1,3,4,6-tetrakisphosphate + H2O = 1D-myo-inositol 1,3,4,5,6-pentakisphosphate + phosphate + H(+). It carries out the reaction P(1),P(6)-bis(5'-adenosyl) hexaphosphate + H2O = 2 ATP + 2 H(+). The enzyme catalyses P(1),P(5)-bis(5'-adenosyl) pentaphosphate + H2O = ADP + ATP + 2 H(+). It catalyses the reaction 5-phospho-alpha-D-ribose 1-diphosphate + H2O = alpha-D-ribose 1,5-bisphosphate + phosphate + H(+). Its function is as follows. Cleaves the beta-phosphate from diphosphoinositol polyphosphates such as PP-InsP5 (diphosphoinositol pentakisphosphate), PP-InsP4 (diphosphoinositol tetrakisphosphate) and [PP]2-InsP4 (bisdiphosphoinositol tetrakisphosphate), suggesting that it may play a role in signal transduction. Diadenosine polyphosphates, particularly Ap6A (P(1),P(6)-bis(5a-adenosyl) hexaphosphate) and Ap5A (P(1),P(5)-bis(5'-adenosyl) pentaphosphate) are downstream effectors of a signaling cascade that regulates cardiac KATP channels, can also be substrates, although with lower preference than the diphosphoinositol polyphosphates. Can also catalyze the hydrolysis of 5-phosphoribose 1-diphosphate, generating the glycolytic activator ribose 1,5-bisphosphate. Does not play a role in U8 snoRNA decapping activity. Binds U8 snoRNA. The chain is Diphosphoinositol polyphosphate phosphohydrolase 2 from Homo sapiens (Human).